A 172-amino-acid polypeptide reads, in one-letter code: Macro domain-containing protein lp_3408 (172 aa).

The Macro domain maps to 1–171 (MVEIKVIHGD…VFSTALAALT (171 aa)).

Belongs to the MacroD-type family.

In Lactiplantibacillus plantarum (strain ATCC BAA-793 / NCIMB 8826 / WCFS1) (Lactobacillus plantarum), this protein is Macro domain-containing protein lp_3408.